A 227-amino-acid chain; its full sequence is Phosphoribosylformylglycinamidine synthase subunit PurQ (227 aa).

In terms of domain architecture, Glutamine amidotransferase type-1 spans 2 to 226; that stretch reads KFAVIQFPGS…VKAWKEEQVN (225 aa). C86 (nucleophile) is an active-site residue. Catalysis depends on residues H195 and E197.

As to quaternary structure, part of the FGAM synthase complex composed of 1 PurL, 1 PurQ and 2 PurS subunits.

The protein resides in the cytoplasm. The catalysed reaction is N(2)-formyl-N(1)-(5-phospho-beta-D-ribosyl)glycinamide + L-glutamine + ATP + H2O = 2-formamido-N(1)-(5-O-phospho-beta-D-ribosyl)acetamidine + L-glutamate + ADP + phosphate + H(+). It carries out the reaction L-glutamine + H2O = L-glutamate + NH4(+). It participates in purine metabolism; IMP biosynthesis via de novo pathway; 5-amino-1-(5-phospho-D-ribosyl)imidazole from N(2)-formyl-N(1)-(5-phospho-D-ribosyl)glycinamide: step 1/2. In terms of biological role, part of the phosphoribosylformylglycinamidine synthase complex involved in the purines biosynthetic pathway. Catalyzes the ATP-dependent conversion of formylglycinamide ribonucleotide (FGAR) and glutamine to yield formylglycinamidine ribonucleotide (FGAM) and glutamate. The FGAM synthase complex is composed of three subunits. PurQ produces an ammonia molecule by converting glutamine to glutamate. PurL transfers the ammonia molecule to FGAR to form FGAM in an ATP-dependent manner. PurS interacts with PurQ and PurL and is thought to assist in the transfer of the ammonia molecule from PurQ to PurL. The sequence is that of Phosphoribosylformylglycinamidine synthase subunit PurQ from Listeria monocytogenes serovar 1/2a (strain ATCC BAA-679 / EGD-e).